A 438-amino-acid chain; its full sequence is Trigger factor (438 aa).

The 86-residue stretch at 163–248 (GEIAVLDFAA…VHAVKERKLP (86 aa)) folds into the PPIase FKBP-type domain.

It belongs to the FKBP-type PPIase family. Tig subfamily.

The protein resides in the cytoplasm. It catalyses the reaction [protein]-peptidylproline (omega=180) = [protein]-peptidylproline (omega=0). In terms of biological role, involved in protein export. Acts as a chaperone by maintaining the newly synthesized protein in an open conformation. Functions as a peptidyl-prolyl cis-trans isomerase. The sequence is that of Trigger factor from Oleidesulfovibrio alaskensis (strain ATCC BAA-1058 / DSM 17464 / G20) (Desulfovibrio alaskensis).